We begin with the raw amino-acid sequence, 324 residues long: tRNA U34 carboxymethyltransferase (324 aa).

Carboxy-S-adenosyl-L-methionine is bound by residues lysine 91, tryptophan 105, lysine 110, glycine 130, 152 to 154, 181 to 182, methionine 196, tyrosine 200, and arginine 315; these read DPS and IE.

This sequence belongs to the class I-like SAM-binding methyltransferase superfamily. CmoB family. In terms of assembly, homotetramer.

The enzyme catalyses carboxy-S-adenosyl-L-methionine + 5-hydroxyuridine(34) in tRNA = 5-carboxymethoxyuridine(34) in tRNA + S-adenosyl-L-homocysteine + H(+). Its function is as follows. Catalyzes carboxymethyl transfer from carboxy-S-adenosyl-L-methionine (Cx-SAM) to 5-hydroxyuridine (ho5U) to form 5-carboxymethoxyuridine (cmo5U) at position 34 in tRNAs. The polypeptide is tRNA U34 carboxymethyltransferase (Aliivibrio fischeri (strain MJ11) (Vibrio fischeri)).